We begin with the raw amino-acid sequence, 183 residues long: TATA-box-binding protein 2 (183 aa).

Repeat copies occupy residues 8-84 (IENV…AKKL) and 99-177 (VQNI…RQQL).

It belongs to the TBP family.

General factor that plays a role in the activation of archaeal genes transcribed by RNA polymerase. Binds specifically to the TATA box promoter element which lies close to the position of transcription initiation. This Methanosarcina mazei (strain ATCC BAA-159 / DSM 3647 / Goe1 / Go1 / JCM 11833 / OCM 88) (Methanosarcina frisia) protein is TATA-box-binding protein 2.